The following is a 342-amino-acid chain: 4-hydroxy-3-methylbut-2-enyl diphosphate reductase (342 aa).

Cysteine 47 is a binding site for [4Fe-4S] cluster. The (2E)-4-hydroxy-3-methylbut-2-enyl diphosphate site is built by histidine 78 and histidine 111. 2 residues coordinate dimethylallyl diphosphate: histidine 78 and histidine 111. Positions 78 and 111 each coordinate isopentenyl diphosphate. Cysteine 133 lines the [4Fe-4S] cluster pocket. Histidine 161 contacts (2E)-4-hydroxy-3-methylbut-2-enyl diphosphate. Histidine 161 lines the dimethylallyl diphosphate pocket. An isopentenyl diphosphate-binding site is contributed by histidine 161. Glutamate 163 (proton donor) is an active-site residue. (2E)-4-hydroxy-3-methylbut-2-enyl diphosphate is bound at residue threonine 201. Cysteine 231 contributes to the [4Fe-4S] cluster binding site. The (2E)-4-hydroxy-3-methylbut-2-enyl diphosphate site is built by serine 259, serine 260, asparagine 261, and serine 303. Positions 259, 260, 261, and 303 each coordinate dimethylallyl diphosphate. 4 residues coordinate isopentenyl diphosphate: serine 259, serine 260, asparagine 261, and serine 303.

It belongs to the IspH family. [4Fe-4S] cluster is required as a cofactor.

The enzyme catalyses isopentenyl diphosphate + 2 oxidized [2Fe-2S]-[ferredoxin] + H2O = (2E)-4-hydroxy-3-methylbut-2-enyl diphosphate + 2 reduced [2Fe-2S]-[ferredoxin] + 2 H(+). It catalyses the reaction dimethylallyl diphosphate + 2 oxidized [2Fe-2S]-[ferredoxin] + H2O = (2E)-4-hydroxy-3-methylbut-2-enyl diphosphate + 2 reduced [2Fe-2S]-[ferredoxin] + 2 H(+). The protein operates within isoprenoid biosynthesis; dimethylallyl diphosphate biosynthesis; dimethylallyl diphosphate from (2E)-4-hydroxy-3-methylbutenyl diphosphate: step 1/1. It functions in the pathway isoprenoid biosynthesis; isopentenyl diphosphate biosynthesis via DXP pathway; isopentenyl diphosphate from 1-deoxy-D-xylulose 5-phosphate: step 6/6. In terms of biological role, catalyzes the conversion of 1-hydroxy-2-methyl-2-(E)-butenyl 4-diphosphate (HMBPP) into a mixture of isopentenyl diphosphate (IPP) and dimethylallyl diphosphate (DMAPP). Acts in the terminal step of the DOXP/MEP pathway for isoprenoid precursor biosynthesis. The chain is 4-hydroxy-3-methylbut-2-enyl diphosphate reductase from Anaplasma marginale (strain St. Maries).